Here is a 510-residue protein sequence, read N- to C-terminus: Major facilitator superfamily domain-containing protein 4A (510 aa).

12 consecutive transmembrane segments (helical) span residues 19-39 (LTYWSVFFSFGLCIAFLGPTL), 53-73 (ISWVFFSQQLCLLLGSALGGV), 82-102 (LWALFTSTLVISLVFAVIPFC), 107-127 (VLASVIALAGLAMGCIDTVAN), 139-159 (AFFLQVLHFFVGLGALLSPLI), 218-238 (YAFWIMALINLPVPLAVLFLL), 303-323 (FFAIHITAALVLFMTDGMMGA), 345-365 (GYLPSLFWGFITLGRFISIPV), 380-400 (VGVVVTFLMLLIFSYNVIFLF), 401-421 (VGTASLGLFLSSTFPSMLAYT), 434-454 (VLVTGAGIGEMVLQMLVGLIF), and 462-482 (FLVCGVIFGCLAFIFYILLLF).

This sequence belongs to the major facilitator superfamily.

The protein resides in the membrane. This is Major facilitator superfamily domain-containing protein 4A from Mus musculus (Mouse).